The chain runs to 461 residues: Cysteine--tRNA ligase (461 aa).

Cys27 provides a ligand contact to Zn(2+). A 'HIGH' region motif is present at residues 29–39 (ITVYDYCHIGH). Cys208, His233, and Glu237 together coordinate Zn(2+). The 'KMSKS' region signature appears at 265 to 269 (KMSKS). Position 268 (Lys268) interacts with ATP.

Belongs to the class-I aminoacyl-tRNA synthetase family. Monomer. Requires Zn(2+) as cofactor.

Its subcellular location is the cytoplasm. It catalyses the reaction tRNA(Cys) + L-cysteine + ATP = L-cysteinyl-tRNA(Cys) + AMP + diphosphate. This chain is Cysteine--tRNA ligase, found in Chromohalobacter salexigens (strain ATCC BAA-138 / DSM 3043 / CIP 106854 / NCIMB 13768 / 1H11).